Consider the following 295-residue polypeptide: Acetylglutamate kinase (295 aa).

Residues 64–65 (GG), arginine 86, and asparagine 190 contribute to the substrate site.

This sequence belongs to the acetylglutamate kinase family. ArgB subfamily.

It is found in the cytoplasm. The enzyme catalyses N-acetyl-L-glutamate + ATP = N-acetyl-L-glutamyl 5-phosphate + ADP. It functions in the pathway amino-acid biosynthesis; L-arginine biosynthesis; N(2)-acetyl-L-ornithine from L-glutamate: step 2/4. Functionally, catalyzes the ATP-dependent phosphorylation of N-acetyl-L-glutamate. This is Acetylglutamate kinase from Pelotomaculum thermopropionicum (strain DSM 13744 / JCM 10971 / SI).